We begin with the raw amino-acid sequence, 298 residues long: Small ribosomal subunit protein uS2 (298 aa).

Residues E232–E298 are disordered. A compositionally biased stretch (acidic residues) spans F234–P250. The segment covering E251–A276 has biased composition (low complexity).

Belongs to the universal ribosomal protein uS2 family.

This chain is Small ribosomal subunit protein uS2, found in Acaryochloris marina (strain MBIC 11017).